Reading from the N-terminus, the 282-residue chain is 4-diphosphocytidyl-2-C-methyl-D-erythritol kinase (282 aa).

Lys12 is a catalytic residue. Pro95 to Ser105 serves as a coordination point for ATP. Residue Asp137 is part of the active site.

It belongs to the GHMP kinase family. IspE subfamily.

It carries out the reaction 4-CDP-2-C-methyl-D-erythritol + ATP = 4-CDP-2-C-methyl-D-erythritol 2-phosphate + ADP + H(+). Its pathway is isoprenoid biosynthesis; isopentenyl diphosphate biosynthesis via DXP pathway; isopentenyl diphosphate from 1-deoxy-D-xylulose 5-phosphate: step 3/6. Functionally, catalyzes the phosphorylation of the position 2 hydroxy group of 4-diphosphocytidyl-2C-methyl-D-erythritol. This Pseudomonas aeruginosa (strain LESB58) protein is 4-diphosphocytidyl-2-C-methyl-D-erythritol kinase.